Here is a 635-residue protein sequence, read N- to C-terminus: Threonine--tRNA ligase (635 aa).

The region spanning 1 to 61 is the TGS domain; it reads MIKITLKDGS…ENDCTLNLLT (61 aa). The catalytic stretch occupies residues 242 to 532; that stretch reads DHRKLGRELD…LTEHYAGAFP (291 aa). Zn(2+) contacts are provided by Cys-333, His-384, and His-509.

It belongs to the class-II aminoacyl-tRNA synthetase family. In terms of assembly, homodimer. The cofactor is Zn(2+).

It is found in the cytoplasm. It catalyses the reaction tRNA(Thr) + L-threonine + ATP = L-threonyl-tRNA(Thr) + AMP + diphosphate + H(+). Its function is as follows. Catalyzes the attachment of threonine to tRNA(Thr) in a two-step reaction: L-threonine is first activated by ATP to form Thr-AMP and then transferred to the acceptor end of tRNA(Thr). Also edits incorrectly charged L-seryl-tRNA(Thr). The sequence is that of Threonine--tRNA ligase from Acetivibrio thermocellus (strain ATCC 27405 / DSM 1237 / JCM 9322 / NBRC 103400 / NCIMB 10682 / NRRL B-4536 / VPI 7372) (Clostridium thermocellum).